The following is a 347-amino-acid chain: L-threonine 3-dehydrogenase (347 aa).

Cysteine 42 serves as a coordination point for Zn(2+). Active-site charge relay system residues include threonine 44 and histidine 47. Zn(2+) is bound by residues histidine 67, glutamate 68, cysteine 97, cysteine 100, cysteine 103, and cysteine 111. NAD(+)-binding positions include isoleucine 180, aspartate 200, arginine 205, 267–269, and 292–293; these read LSL and IT.

The protein belongs to the zinc-containing alcohol dehydrogenase family. Homotetramer. It depends on Zn(2+) as a cofactor.

The protein localises to the cytoplasm. It catalyses the reaction L-threonine + NAD(+) = (2S)-2-amino-3-oxobutanoate + NADH + H(+). It participates in amino-acid degradation; L-threonine degradation via oxydo-reductase pathway; glycine from L-threonine: step 1/2. Catalyzes the NAD(+)-dependent oxidation of L-threonine to 2-amino-3-ketobutyrate. The sequence is that of L-threonine 3-dehydrogenase from Bacillus velezensis (strain DSM 23117 / BGSC 10A6 / LMG 26770 / FZB42) (Bacillus amyloliquefaciens subsp. plantarum).